We begin with the raw amino-acid sequence, 950 residues long: Leucine--tRNA ligase (950 aa).

The 'HIGH' region motif lies at 72-83 (PYPSGEGLHVGH). The short motif at 722-726 (KIGKS) is the 'KMSKS' region element. ATP is bound at residue lysine 725.

This sequence belongs to the class-I aminoacyl-tRNA synthetase family.

Its subcellular location is the cytoplasm. The catalysed reaction is tRNA(Leu) + L-leucine + ATP = L-leucyl-tRNA(Leu) + AMP + diphosphate. In Mycobacterium sp. (strain JLS), this protein is Leucine--tRNA ligase.